The chain runs to 308 residues: Homogentisate phytyltransferase (308 aa).

Helical transmembrane passes span 13–33 (PHTI…TILG), 44–64 (LDLV…IVGL), 104–124 (LAIA…SLII), 142–162 (AALC…FLFF), 173–193 (ITPI…IAIF), 219–241 (VFRG…GLWA), 245–263 (LNTA…LLWW), and 279–299 (FYQF…LALW).

Belongs to the UbiA prenyltransferase family.

The protein resides in the membrane. It catalyses the reaction phytyl diphosphate + homogentisate + H(+) = 2-methyl-6-phytyl-1,4-benzene-1,4-diol + CO2 + diphosphate. Its pathway is cofactor biosynthesis; tocopherol biosynthesis. In terms of biological role, involved in the synthesis of tocopherol (vitamin E). Catalyzes the condensation of homogentisate and phytyl diphosphate to form dimethylphytylhydrquinone. This is Homogentisate phytyltransferase from Synechocystis sp. (strain ATCC 27184 / PCC 6803 / Kazusa).